The following is a 216-amino-acid chain: CASP-like protein 2U1 (216 aa).

The segment at 1–30 (MKQDTEMGEATNGYIGTPGTVPVSHAGNDS) is disordered. Residues 1 to 37 (MKQDTEMGEATNGYIGTPGTVPVSHAGNDSGMRRMRT) are Cytoplasmic-facing. Residues 38-58 (ASILMRLTAMALCVTALVTMV) traverse the membrane as a helical segment. The Extracellular portion of the chain corresponds to 59 to 86 (TDKQTHYFNFASTTIVKTAEYTNVLALK). The chain crosses the membrane as a helical span at residues 87–107 (VFVYTNGVIAGYSLLQALWTI). Over 108-128 (VAKSSYSTSKARLWTTFFLDQ) the chain is Cytoplasmic. Residues 129-148 (FIVYVLIGVTGAATEVAYIA) traverse the membrane as a helical segment. Over 149–170 (EKGESDVAWPKQCNNFGRFCSQ) the chain is Extracellular. A helical membrane pass occupies residues 171-191 (VGASVIVCFVAILTLVFLAVL). At 192-216 (SAKQLFIHERPSRTTRKDGYYTSNQ) the chain is on the cytoplasmic side.

It belongs to the Casparian strip membrane proteins (CASP) family. As to quaternary structure, homodimer and heterodimers.

The protein resides in the cell membrane. This Marchantia polymorpha (Common liverwort) protein is CASP-like protein 2U1.